The primary structure comprises 97 residues: Large ribosomal subunit protein uL23 (97 aa).

The protein belongs to the universal ribosomal protein uL23 family. Part of the 50S ribosomal subunit. Contacts protein L29, and trigger factor when it is bound to the ribosome.

Its function is as follows. One of the early assembly proteins it binds 23S rRNA. One of the proteins that surrounds the polypeptide exit tunnel on the outside of the ribosome. Forms the main docking site for trigger factor binding to the ribosome. In Thermoanaerobacter pseudethanolicus (strain ATCC 33223 / 39E) (Clostridium thermohydrosulfuricum), this protein is Large ribosomal subunit protein uL23.